Here is a 412-residue protein sequence, read N- to C-terminus: Lipoyl synthase, mitochondrial (412 aa).

A mitochondrion-targeting transit peptide spans 1–28; it reads MASIAPSLKRAHAPLRKALTASSTIRAF. Positions 124, 129, 135, 155, 159, 162, and 372 each coordinate [4Fe-4S] cluster. In terms of domain architecture, Radical SAM core spans 138–361; sequence GSDKNAATAT…NKRALDMGFL (224 aa).

Belongs to the radical SAM superfamily. Lipoyl synthase family. The cofactor is [4Fe-4S] cluster.

It localises to the mitochondrion. It carries out the reaction [[Fe-S] cluster scaffold protein carrying a second [4Fe-4S](2+) cluster] + N(6)-octanoyl-L-lysyl-[protein] + 2 oxidized [2Fe-2S]-[ferredoxin] + 2 S-adenosyl-L-methionine + 4 H(+) = [[Fe-S] cluster scaffold protein] + N(6)-[(R)-dihydrolipoyl]-L-lysyl-[protein] + 4 Fe(3+) + 2 hydrogen sulfide + 2 5'-deoxyadenosine + 2 L-methionine + 2 reduced [2Fe-2S]-[ferredoxin]. It participates in protein modification; protein lipoylation via endogenous pathway; protein N(6)-(lipoyl)lysine from octanoyl-[acyl-carrier-protein]: step 2/2. Its function is as follows. Catalyzes the radical-mediated insertion of two sulfur atoms into the C-6 and C-8 positions of the octanoyl moiety bound to the lipoyl domains of lipoate-dependent enzymes, thereby converting the octanoylated domains into lipoylated derivatives. In Fusarium vanettenii (strain ATCC MYA-4622 / CBS 123669 / FGSC 9596 / NRRL 45880 / 77-13-4) (Fusarium solani subsp. pisi), this protein is Lipoyl synthase, mitochondrial.